We begin with the raw amino-acid sequence, 528 residues long: Coiled-coil domain-containing protein 116 (528 aa).

The interval 43–68 (GHVPHPPSTCGSSALQNQRRNKRHPQ) is disordered. The span at 51-60 (TCGSSALQNQ) shows a compositional bias: polar residues. A coiled-coil region spans residues 81-104 (HVLDSLETVVEKATERMAAMKTEA). 2 disordered regions span residues 335–444 (PLFP…RQRA) and 497–528 (SSSPSSLCPEVTSSKVGPDMSLQEKGSLTHHS). Residues 363-378 (PTNSGQPHPTVSSPKT) show a composition bias toward polar residues. The residue at position 389 (serine 389) is a Phosphoserine. The span at 419–429 (HSREKEPDSDP) shows a compositional bias: basic and acidic residues. The span at 434 to 443 (PPVSLSSRQR) shows a compositional bias: polar residues. Residues 497 to 510 (SSSPSSLCPEVTSS) show a composition bias toward low complexity.

Its subcellular location is the cytoplasm. The protein resides in the cytoskeleton. The protein localises to the microtubule organizing center. It is found in the centrosome. This Macaca fascicularis (Crab-eating macaque) protein is Coiled-coil domain-containing protein 116 (CCDC116).